Reading from the N-terminus, the 300-residue chain is Sulfate adenylyltransferase subunit 2 (300 aa).

This sequence belongs to the PAPS reductase family. CysD subfamily. Heterodimer composed of CysD, the smaller subunit, and CysN.

The enzyme catalyses sulfate + ATP + H(+) = adenosine 5'-phosphosulfate + diphosphate. The protein operates within sulfur metabolism; hydrogen sulfide biosynthesis; sulfite from sulfate: step 1/3. In terms of biological role, with CysN forms the ATP sulfurylase (ATPS) that catalyzes the adenylation of sulfate producing adenosine 5'-phosphosulfate (APS) and diphosphate, the first enzymatic step in sulfur assimilation pathway. APS synthesis involves the formation of a high-energy phosphoric-sulfuric acid anhydride bond driven by GTP hydrolysis by CysN coupled to ATP hydrolysis by CysD. This Magnetococcus marinus (strain ATCC BAA-1437 / JCM 17883 / MC-1) protein is Sulfate adenylyltransferase subunit 2.